A 331-amino-acid polypeptide reads, in one-letter code: Ketol-acid reductoisomerase (NADP(+)) (331 aa).

Residues 2–182 form the KARI N-terminal Rossmann domain; that stretch reads ARMYYDEDGN…GGTRAGILET (181 aa). NADP(+) is bound by residues 25 to 28, serine 51, serine 53, and 83 to 86; these read YGSQ and DEVQ. The active site involves histidine 108. Residue glycine 134 participates in NADP(+) binding. The KARI C-terminal knotted domain occupies 183–328; it reads SFREETETDL…KDLRAMFSWL (146 aa). Mg(2+)-binding residues include aspartate 191, glutamate 195, glutamate 227, and glutamate 231. Serine 252 contacts substrate.

Belongs to the ketol-acid reductoisomerase family. Mg(2+) is required as a cofactor.

The catalysed reaction is (2R)-2,3-dihydroxy-3-methylbutanoate + NADP(+) = (2S)-2-acetolactate + NADPH + H(+). It catalyses the reaction (2R,3R)-2,3-dihydroxy-3-methylpentanoate + NADP(+) = (S)-2-ethyl-2-hydroxy-3-oxobutanoate + NADPH + H(+). The protein operates within amino-acid biosynthesis; L-isoleucine biosynthesis; L-isoleucine from 2-oxobutanoate: step 2/4. It functions in the pathway amino-acid biosynthesis; L-valine biosynthesis; L-valine from pyruvate: step 2/4. Functionally, involved in the biosynthesis of branched-chain amino acids (BCAA). Catalyzes an alkyl-migration followed by a ketol-acid reduction of (S)-2-acetolactate (S2AL) to yield (R)-2,3-dihydroxy-isovalerate. In the isomerase reaction, S2AL is rearranged via a Mg-dependent methyl migration to produce 3-hydroxy-3-methyl-2-ketobutyrate (HMKB). In the reductase reaction, this 2-ketoacid undergoes a metal-dependent reduction by NADPH to yield (R)-2,3-dihydroxy-isovalerate. The protein is Ketol-acid reductoisomerase (NADP(+)) of Gloeothece citriformis (strain PCC 7424) (Cyanothece sp. (strain PCC 7424)).